We begin with the raw amino-acid sequence, 613 residues long: Glucose-6-phosphate isomerase 1, chloroplastic (613 aa).

Positions M1–L14 are enriched in low complexity. Residues M1–S21 are disordered. A chloroplast-targeting transit peptide spans M1–L48. E392 (proton donor) is an active-site residue. Catalysis depends on residues H421 and K526. S595 carries the post-translational modification Phosphoserine.

It belongs to the GPI family.

It is found in the plastid. Its subcellular location is the chloroplast stroma. It carries out the reaction alpha-D-glucose 6-phosphate = beta-D-fructose 6-phosphate. It participates in carbohydrate degradation; glycolysis; D-glyceraldehyde 3-phosphate and glycerone phosphate from D-glucose: step 2/4. The protein operates within carbohydrate biosynthesis; gluconeogenesis. Inhibited by glycerol-3-P (G3P). In terms of biological role, promotes the synthesis of starch in leaves. This is Glucose-6-phosphate isomerase 1, chloroplastic (PGI1) from Arabidopsis thaliana (Mouse-ear cress).